The sequence spans 172 residues: SsrA-binding protein (172 aa).

The protein belongs to the SmpB family.

The protein resides in the cytoplasm. Its function is as follows. Required for rescue of stalled ribosomes mediated by trans-translation. Binds to transfer-messenger RNA (tmRNA), required for stable association of tmRNA with ribosomes. tmRNA and SmpB together mimic tRNA shape, replacing the anticodon stem-loop with SmpB. tmRNA is encoded by the ssrA gene; the 2 termini fold to resemble tRNA(Ala) and it encodes a 'tag peptide', a short internal open reading frame. During trans-translation Ala-aminoacylated tmRNA acts like a tRNA, entering the A-site of stalled ribosomes, displacing the stalled mRNA. The ribosome then switches to translate the ORF on the tmRNA; the nascent peptide is terminated with the 'tag peptide' encoded by the tmRNA and targeted for degradation. The ribosome is freed to recommence translation, which seems to be the essential function of trans-translation. The sequence is that of SsrA-binding protein from Dehalococcoides mccartyi (strain CBDB1).